The chain runs to 819 residues: Ion-translocating oxidoreductase complex subunit C (819 aa).

4Fe-4S ferredoxin-type domains are found at residues 368–398 (EYAE…QQLY) and 408–437 (KSEE…IQYF). Residues Cys-378, Cys-381, Cys-384, Cys-388, Cys-417, Cys-420, Cys-423, and Cys-427 each coordinate [4Fe-4S] cluster. Composition is skewed to basic and acidic residues over residues 465–477 (QARM…ERKA) and 485–513 (ARRE…KANE). Disordered regions lie at residues 465–568 (QARM…NAKK), 580–677 (AKKL…TALD), and 692–793 (AKKL…PKKA). Polar residues-rich tracts occupy residues 554 to 565 (VENQEQQTQPTN) and 587 to 601 (NSTS…TAEN). Positions 602–614 (QVEKTKSAVEKTQ) are enriched in basic and acidic residues. Residues 641 to 656 (QTNSTSEAISNSQTAE) show a composition bias toward polar residues. Basic and acidic residues predominate over residues 658 to 671 (EVEKTKSAVEKTEE). Composition is skewed to polar residues over residues 699–712 (NSAS…QTAE) and 755–768 (NSTS…QTAE). Basic and acidic residues predominate over residues 770–782 (EVEKTKSAVEKTQ).

The protein belongs to the 4Fe4S bacterial-type ferredoxin family. RnfC subfamily. In terms of assembly, the complex is composed of six subunits: RnfA, RnfB, RnfC, RnfD, RnfE and RnfG. [4Fe-4S] cluster serves as cofactor.

It is found in the cell inner membrane. Functionally, part of a membrane-bound complex that couples electron transfer with translocation of ions across the membrane. This is Ion-translocating oxidoreductase complex subunit C from Haemophilus influenzae (strain ATCC 51907 / DSM 11121 / KW20 / Rd).